Consider the following 88-residue polypeptide: Small ribosomal subunit protein uS15c (88 aa).

Belongs to the universal ribosomal protein uS15 family. Part of the 30S ribosomal subunit.

The protein resides in the plastid. The protein localises to the chloroplast. The protein is Small ribosomal subunit protein uS15c (rps15) of Aethionema grandiflorum (Persian stone-cress).